Consider the following 501-residue polypeptide: Aldehyde dehydrogenase family 2 member C4 (501 aa).

An NAD(+)-binding site is contributed by 245 to 250 (GSTDVG). Residue E268 is the Proton acceptor of the active site. C302 acts as the Nucleophile in catalysis.

This sequence belongs to the aldehyde dehydrogenase family. As to quaternary structure, homotetramer.

It localises to the cytoplasm. The protein resides in the cytosol. The enzyme catalyses an aldehyde + NAD(+) + H2O = a carboxylate + NADH + 2 H(+). Involved in ferulic acid and sinapic acid biosynthesis by oxidation of conyferylaldehyde and sinapaldehyde, respectively. Can oxidize L-lactaldehyde. Possesses activity on acetaldehyde and glycolaldehyde in vitro. The polypeptide is Aldehyde dehydrogenase family 2 member C4 (ALDH2C4) (Arabidopsis thaliana (Mouse-ear cress)).